Consider the following 470-residue polypeptide: tRNA modification GTPase MnmE (470 aa).

(6S)-5-formyl-5,6,7,8-tetrahydrofolate contacts are provided by Arg-30, Glu-92, and Arg-132. The region spanning 227 to 393 (GLQVALVGRP…LIKAVLKTCG (167 aa)) is the TrmE-type G domain. Residue Asn-237 participates in K(+) binding. Residues 237 to 242 (NVGKSS), 256 to 262 (TDLPGTT), 281 to 284 (DTAG), and 342 to 345 (NKAD) contribute to the GTP site. Ser-241 is a Mg(2+) binding site. K(+) contacts are provided by Thr-256, Leu-258, and Thr-261. Thr-262 serves as a coordination point for Mg(2+). Lys-470 lines the (6S)-5-formyl-5,6,7,8-tetrahydrofolate pocket.

The protein belongs to the TRAFAC class TrmE-Era-EngA-EngB-Septin-like GTPase superfamily. TrmE GTPase family. In terms of assembly, homodimer. Heterotetramer of two MnmE and two MnmG subunits. K(+) serves as cofactor.

It is found in the cytoplasm. Its function is as follows. Exhibits a very high intrinsic GTPase hydrolysis rate. Involved in the addition of a carboxymethylaminomethyl (cmnm) group at the wobble position (U34) of certain tRNAs, forming tRNA-cmnm(5)s(2)U34. This Prochlorococcus marinus (strain MIT 9313) protein is tRNA modification GTPase MnmE.